Reading from the N-terminus, the 292-residue chain is MYGLRTLFSLGLLVGGARLGARVAQVGALGGTCPLGQGLVADGNSQCKQFRTGAAMERGLRYLSQEEAQAVDEELFNEYRFSVDQLMELAGLSCAVAITKAYPVSSFTSNLPTVLVVCGPGNNGGDGLVCARHLKLFKGYEPAIHYPKRPNKTLFENLTTQCQKMDIPFVSEFPSEPEVIDGAYNLVVDAVFGFSFKGAVREPFGNILSTLKRVTVPIASVDIPSGWDVEKGNPEGIQPDMLISLTAPKQSAVHFTGRYHFLGGRFVPKALEKKYSLNLPPYPGTECVQKLP.

Residues 1–52 constitute a mitochondrion transit peptide; sequence MYGLRTLFSLGLLVGGARLGARVAQVGALGGTCPLGQGLVADGNSQCKQFRT. The 212-residue stretch at 68-279 folds into the YjeF N-terminal domain; that stretch reads AQAVDEELFN…ALEKKYSLNL (212 aa). (6S)-NADPHX is bound at residue 122-126; it reads NNGGD. K(+)-binding residues include Asn-123 and Asp-189. Residues 193–199 and Asp-222 each bind (6S)-NADPHX; that span reads GFSFKGA. Residue Ser-225 coordinates K(+).

The protein belongs to the NnrE/AIBP family. K(+) is required as a cofactor.

Its subcellular location is the mitochondrion. The protein localises to the secreted. The catalysed reaction is (6R)-NADHX = (6S)-NADHX. It carries out the reaction (6R)-NADPHX = (6S)-NADPHX. In terms of biological role, catalyzes the epimerization of the S- and R-forms of NAD(P)HX, a damaged form of NAD(P)H that is a result of enzymatic or heat-dependent hydration. This is a prerequisite for the S-specific NAD(P)H-hydrate dehydratase to allow the repair of both epimers of NAD(P)HX. The sequence is that of NAD(P)H-hydrate epimerase from Xenopus tropicalis (Western clawed frog).